The sequence spans 564 residues: Beta-hexosaminidase subunit B2 (564 aa).

The signal sequence occupies residues 1 to 19 (MKLKFIFLILFFIIGNSIG). N-linked (GlcNAc...) asparagine glycans are attached at residues Asn-43, Asn-84, Asn-303, and Asn-347. The Proton donor role is filled by Glu-357. 5 N-linked (GlcNAc...) asparagine glycosylation sites follow: Asn-364, Asn-377, Asn-439, Asn-524, and Asn-551.

This sequence belongs to the glycosyl hydrolase 20 family.

The protein localises to the lysosome. The catalysed reaction is Hydrolysis of terminal non-reducing N-acetyl-D-hexosamine residues in N-acetyl-beta-D-hexosaminides.. Responsible for the degradation of GM2 gangliosides, and a variety of other molecules containing terminal N-acetyl hexosamines. The protein is Beta-hexosaminidase subunit B2 (hexb2) of Dictyostelium discoideum (Social amoeba).